The chain runs to 152 residues: Endoribonuclease YbeY (152 aa).

Residues H117, H121, and H127 each contribute to the Zn(2+) site.

It belongs to the endoribonuclease YbeY family. The cofactor is Zn(2+).

Its subcellular location is the cytoplasm. Functionally, single strand-specific metallo-endoribonuclease involved in late-stage 70S ribosome quality control and in maturation of the 3' terminus of the 16S rRNA. The chain is Endoribonuclease YbeY from Sulfurihydrogenibium sp. (strain YO3AOP1).